We begin with the raw amino-acid sequence, 342 residues long: Phosphoribosylformylglycinamidine cyclo-ligase (342 aa).

This sequence belongs to the AIR synthase family.

It is found in the cytoplasm. The catalysed reaction is 2-formamido-N(1)-(5-O-phospho-beta-D-ribosyl)acetamidine + ATP = 5-amino-1-(5-phospho-beta-D-ribosyl)imidazole + ADP + phosphate + H(+). It participates in purine metabolism; IMP biosynthesis via de novo pathway; 5-amino-1-(5-phospho-D-ribosyl)imidazole from N(2)-formyl-N(1)-(5-phospho-D-ribosyl)glycinamide: step 2/2. The protein is Phosphoribosylformylglycinamidine cyclo-ligase of Staphylococcus saprophyticus subsp. saprophyticus (strain ATCC 15305 / DSM 20229 / NCIMB 8711 / NCTC 7292 / S-41).